Consider the following 476-residue polypeptide: 3-isopropylmalate dehydratase large subunit (476 aa).

The [4Fe-4S] cluster site is built by Cys357, Cys417, and Cys420.

Belongs to the aconitase/IPM isomerase family. LeuC type 1 subfamily. As to quaternary structure, heterodimer of LeuC and LeuD. Requires [4Fe-4S] cluster as cofactor.

It carries out the reaction (2R,3S)-3-isopropylmalate = (2S)-2-isopropylmalate. Its pathway is amino-acid biosynthesis; L-leucine biosynthesis; L-leucine from 3-methyl-2-oxobutanoate: step 2/4. Functionally, catalyzes the isomerization between 2-isopropylmalate and 3-isopropylmalate, via the formation of 2-isopropylmaleate. The chain is 3-isopropylmalate dehydratase large subunit from Mycobacterium avium (strain 104).